Reading from the N-terminus, the 179-residue chain is Large ribosomal subunit protein uL6 (179 aa).

The protein belongs to the universal ribosomal protein uL6 family. In terms of assembly, part of the 50S ribosomal subunit.

Functionally, this protein binds to the 23S rRNA, and is important in its secondary structure. It is located near the subunit interface in the base of the L7/L12 stalk, and near the tRNA binding site of the peptidyltransferase center. This is Large ribosomal subunit protein uL6 from Prochlorococcus marinus (strain MIT 9211).